The following is a 466-amino-acid chain: Lipase 2 (466 aa).

The N-terminal stretch at 1–16 is a signal peptide; that stretch reads MKGLVFLLGLLPTIYA. Residues cysteine 112 and cysteine 285 are joined by a disulfide bond. Serine 196 functions as the Charge relay system in the catalytic mechanism. N-linked (GlcNAc...) asparagine glycosylation is found at asparagine 231, asparagine 319, and asparagine 331. Catalysis depends on charge relay system residues aspartate 348 and histidine 381. Cysteines 364 and 409 form a disulfide. Residues asparagine 422 and asparagine 451 are each glycosylated (N-linked (GlcNAc...) asparagine).

This sequence belongs to the AB hydrolase superfamily. Lipase family. Class Lip subfamily.

The protein localises to the secreted. The enzyme catalyses a triacylglycerol + H2O = a diacylglycerol + a fatty acid + H(+). Functionally, secreted lipase that is able to hydrolyze both the neutral triacylglycerols and the monopalmitate ester Tween 40, allowing the use of hydrolyzed products as carbon sources. Has broad lipolytic activity, which may be important for colonization and subsequent infection, therefore contributing to the persistence and virulence in human tissue. My be important for alimentary tract colonization, but not oral infection. Facilitates invasive disease via lipid-based suppression of the IL-17 response. Inhibits IL-17 production indirectly by suppressing IL-23 production by tissue-resident dendritic cells. The chain is Lipase 2 from Candida albicans (strain SC5314 / ATCC MYA-2876) (Yeast).